The following is a 913-amino-acid chain: Calcium-activated chloride channel regulator 1 (913 aa).

Positions 1–21 (MGPFKSSVFILILHLLEGALS) are cleaved as a signal peptide. Residues 46–199 (DETLIQQIKD…GITGKIEVNK (154 aa)) form a metalloprotease domain region. His-156 lines the Zn(2+) pocket. Glu-157 is an active-site residue. The Zn(2+) site is built by His-160 and Asp-167. Positions 306–475 (IVCLVLDKSG…NGLIDAFGAL (170 aa)) constitute a VWFA domain. N-linked (GlcNAc...) asparagine glycosylation is found at Asn-503, Asn-769, Asn-803, Asn-809, Asn-830, Asn-835, Asn-885, and Asn-889. The disordered stretch occupies residues 866–885 (PPQTPPETPSPDETSAPCPN).

The protein belongs to the CLCR family. Glycosylated. In terms of processing, the translation product is autoproteolytically cleaved by the metalloprotease domain in the endoplasmic reticulum into a N-terminal and a C-terminal products that remain physically associated with each other. The cleavage is necessary for calcium-activated chloride channel (CaCC) activation activity.

Its subcellular location is the secreted. It localises to the extracellular space. Functionally, may be involved in mediating calcium-activated chloride conductance. May play critical roles in goblet cell metaplasia, mucus hypersecretion, cystic fibrosis and AHR. May be involved in the regulation of mucus production and/or secretion by goblet cells. Involved in the regulation of tissue inflammation in the innate immune response. May play a role as a tumor suppressor. Induces MUC5AC. This is Calcium-activated chloride channel regulator 1 (CLCA1) from Macaca mulatta (Rhesus macaque).